The primary structure comprises 65 residues: Large ribosomal subunit protein bL35 (65 aa).

The tract at residues Met-1 to Gln-26 is disordered. Positions Ala-10–Gln-26 are enriched in basic residues.

It belongs to the bacterial ribosomal protein bL35 family.

The sequence is that of Large ribosomal subunit protein bL35 from Mannheimia succiniciproducens (strain KCTC 0769BP / MBEL55E).